Reading from the N-terminus, the 403-residue chain is Nuclear receptor subfamily 2 group F member 5 (403 aa).

The segment at 16–44 (PGSQLQMCSQEPGGTPGTPSGSTPGNDAL) is disordered. Residues 51–126 (NVDCMVCGDK…VGMRREAVQR (76 aa)) constitute a DNA-binding region (nuclear receptor). 2 NR C4-type zinc fingers span residues 54–74 (CMVC…CEGC) and 90–114 (CRGN…LKKC). Residues 152–378 (YLSGFISLLL…TLLRDMLLSG (227 aa)) enclose the NR LBD domain.

It belongs to the nuclear hormone receptor family. NR2 subfamily.

It localises to the nucleus. In terms of biological role, putative receptor that is required in photoreceptor cells precursors during eye development. The protein is Nuclear receptor subfamily 2 group F member 5 (nr2f5) of Danio rerio (Zebrafish).